Here is a 127-residue protein sequence, read N- to C-terminus: uncharacterized protein (127 aa).

Residues 1-46 form the HTH asnC-type domain; sequence MEVGLSPSACLRRIKLMEQAGVIRGYTALVDPTQSESTIAVIINIT.

In terms of biological role, not known, symbiotically active. This is an uncharacterized protein from Sinorhizobium fredii (strain NBRC 101917 / NGR234).